The primary structure comprises 355 residues: 3-dehydroquinate synthase (355 aa).

NAD(+)-binding positions include 98–102 (GVVGD), 122–123 (TT), K135, K144, and 162–165 (TLDT). Positions 177, 240, and 257 each coordinate Zn(2+).

It belongs to the sugar phosphate cyclases superfamily. Dehydroquinate synthase family. Co(2+) is required as a cofactor. The cofactor is Zn(2+). Requires NAD(+) as cofactor.

It localises to the cytoplasm. The catalysed reaction is 7-phospho-2-dehydro-3-deoxy-D-arabino-heptonate = 3-dehydroquinate + phosphate. Its pathway is metabolic intermediate biosynthesis; chorismate biosynthesis; chorismate from D-erythrose 4-phosphate and phosphoenolpyruvate: step 2/7. Catalyzes the conversion of 3-deoxy-D-arabino-heptulosonate 7-phosphate (DAHP) to dehydroquinate (DHQ). In Dictyoglomus turgidum (strain DSM 6724 / Z-1310), this protein is 3-dehydroquinate synthase.